The following is a 49-amino-acid chain: Small, acid-soluble spore protein O (49 aa).

The segment at 1–49 (MGKRKANHTISGMNAASAQGQGTGYNEEFANEPFTPAERQNNKKRKKNQ) is disordered. A compositionally biased stretch (polar residues) spans 8 to 20 (HTISGMNAASAQG).

The protein belongs to the SspO family.

It localises to the spore core. This chain is Small, acid-soluble spore protein O, found in Bacillus cereus (strain ATCC 14579 / DSM 31 / CCUG 7414 / JCM 2152 / NBRC 15305 / NCIMB 9373 / NCTC 2599 / NRRL B-3711).